The chain runs to 406 residues: Tryptophan synthase beta chain (406 aa).

Residue K99 is modified to N6-(pyridoxal phosphate)lysine.

It belongs to the TrpB family. Tetramer of two alpha and two beta chains. The cofactor is pyridoxal 5'-phosphate.

It catalyses the reaction (1S,2R)-1-C-(indol-3-yl)glycerol 3-phosphate + L-serine = D-glyceraldehyde 3-phosphate + L-tryptophan + H2O. The protein operates within amino-acid biosynthesis; L-tryptophan biosynthesis; L-tryptophan from chorismate: step 5/5. Its function is as follows. The beta subunit is responsible for the synthesis of L-tryptophan from indole and L-serine. This chain is Tryptophan synthase beta chain (trpB), found in Agrobacterium fabrum (strain C58 / ATCC 33970) (Agrobacterium tumefaciens (strain C58)).